Reading from the N-terminus, the 72-residue chain is Large ribosomal subunit protein bL31 (72 aa).

This sequence belongs to the bacterial ribosomal protein bL31 family. Type A subfamily. In terms of assembly, part of the 50S ribosomal subunit.

Binds the 23S rRNA. The sequence is that of Large ribosomal subunit protein bL31 from Maricaulis maris (strain MCS10) (Caulobacter maris).